The sequence spans 417 residues: Citrate synthase-related protein DDB_G0287281 (417 aa).

The interval 284–317 is disordered; sequence NKNNNNNNNNNNNNNNNNNNNNNNNNSEDDDDDN. The span at 286–309 shows a compositional bias: low complexity; sequence NNNNNNNNNNNNNNNNNNNNNNNN.

It belongs to the citrate synthase family.

The polypeptide is Citrate synthase-related protein DDB_G0287281 (Dictyostelium discoideum (Social amoeba)).